The chain runs to 284 residues: Bifunctional protein FolD (284 aa).

Residues 164–166 and Ser-189 each bind NADP(+); that span reads GRS.

The protein belongs to the tetrahydrofolate dehydrogenase/cyclohydrolase family. As to quaternary structure, homodimer.

It carries out the reaction (6R)-5,10-methylene-5,6,7,8-tetrahydrofolate + NADP(+) = (6R)-5,10-methenyltetrahydrofolate + NADPH. The catalysed reaction is (6R)-5,10-methenyltetrahydrofolate + H2O = (6R)-10-formyltetrahydrofolate + H(+). Its pathway is one-carbon metabolism; tetrahydrofolate interconversion. Its function is as follows. Catalyzes the oxidation of 5,10-methylenetetrahydrofolate to 5,10-methenyltetrahydrofolate and then the hydrolysis of 5,10-methenyltetrahydrofolate to 10-formyltetrahydrofolate. The chain is Bifunctional protein FolD from Listeria monocytogenes serotype 4a (strain HCC23).